Consider the following 563-residue polypeptide: Putative GMC-type oxidoreductase L128 (563 aa).

Residues 1–21 (MTSSIVLKFFLIATLLVIANS) form the signal peptide. 48 to 77 (DYVIVGGGAAGSVLLDKCISYGYKCTLIER) is an FAD binding site. H504 acts as the Proton acceptor in catalysis.

The protein belongs to the GMC oxidoreductase family. FAD serves as cofactor.

The chain is Putative GMC-type oxidoreductase L128 from Acanthamoeba polyphaga mimivirus (APMV).